We begin with the raw amino-acid sequence, 248 residues long: Pyridoxine 5'-phosphate synthase (248 aa).

Residue Asn11 coordinates 3-amino-2-oxopropyl phosphate. 13–14 lines the 1-deoxy-D-xylulose 5-phosphate pocket; that stretch reads DH. Arg22 is a 3-amino-2-oxopropyl phosphate binding site. Residue His47 is the Proton acceptor of the active site. 1-deoxy-D-xylulose 5-phosphate is bound by residues Arg49 and His54. The Proton acceptor role is filled by Glu74. Residue Thr104 coordinates 1-deoxy-D-xylulose 5-phosphate. The active-site Proton donor is His198. 3-amino-2-oxopropyl phosphate contacts are provided by residues Gly199 and 220–221; that span reads GH.

The protein belongs to the PNP synthase family. Homooctamer; tetramer of dimers.

The protein localises to the cytoplasm. The enzyme catalyses 3-amino-2-oxopropyl phosphate + 1-deoxy-D-xylulose 5-phosphate = pyridoxine 5'-phosphate + phosphate + 2 H2O + H(+). The protein operates within cofactor biosynthesis; pyridoxine 5'-phosphate biosynthesis; pyridoxine 5'-phosphate from D-erythrose 4-phosphate: step 5/5. In terms of biological role, catalyzes the complicated ring closure reaction between the two acyclic compounds 1-deoxy-D-xylulose-5-phosphate (DXP) and 3-amino-2-oxopropyl phosphate (1-amino-acetone-3-phosphate or AAP) to form pyridoxine 5'-phosphate (PNP) and inorganic phosphate. The polypeptide is Pyridoxine 5'-phosphate synthase (Ruegeria pomeroyi (strain ATCC 700808 / DSM 15171 / DSS-3) (Silicibacter pomeroyi)).